A 398-amino-acid chain; its full sequence is Probable peptidoglycan glycosyltransferase FtsW (398 aa).

Residues 1-20 (MSTQAIRGARGLVLKWGAGR) are Cytoplasmic-facing. Residues 21–41 (FYLDTVLLSVSLGLMLFGFVM) form a helical membrane-spanning segment. Over 42 to 57 (VSSASLHLGEKMASDS) the chain is Periplasmic. A helical transmembrane segment spans residues 58 to 78 (FYFPKHQLVHILLGLAAGWGA). Residues 79–92 (ARVRLDTLERHSRS) are Cytoplasmic-facing. A helical membrane pass occupies residues 93–113 (LFWAGIALLVLVLIPGVGKSV). At 114-121 (NGSVRWIN) the chain is on the periplasmic side. The chain crosses the membrane as a helical span at residues 122–142 (LFGLRVQVSEVFKLVAAIYVA). At 143–153 (GYISRHLDTVR) the chain is on the cytoplasmic side. The chain crosses the membrane as a helical span at residues 154–174 (TSVKGMIFPLSLLAIGAVLLL). At 175–177 (KEP) the chain is on the periplasmic side. Residues 178–198 (DFGATAVVMATALGMLFLAGA) form a helical membrane-spanning segment. A topological domain (cytoplasmic) is located at residue arginine 199. Residues 200–220 (LWVFVGLLGLVAVAGTVLIYT) traverse the membrane as a helical segment. Over 221-289 (AEYRLRRVLS…LFSVIGEELG (69 aa)) the chain is Periplasmic. A helical transmembrane segment spans residues 290–310 (LWGATTVILLFAIVVWRALAI). At 311–318 (GRLAERSG) the chain is on the cytoplasmic side. A helical transmembrane segment spans residues 319 to 339 (NLFAAFLAYGIGIWLGLQSFI). The Periplasmic portion of the chain corresponds to 340–355 (NMGVNMGMLPTKGLTL). Residues 356–376 (PLMSYGGGSMMVVCAAIGLLF) traverse the membrane as a helical segment. Over 377–398 (RIRSEAVASFLGNGRKGLWPGV) the chain is Cytoplasmic.

Belongs to the SEDS family. FtsW subfamily.

The protein resides in the cell inner membrane. It catalyses the reaction [GlcNAc-(1-&gt;4)-Mur2Ac(oyl-L-Ala-gamma-D-Glu-L-Lys-D-Ala-D-Ala)](n)-di-trans,octa-cis-undecaprenyl diphosphate + beta-D-GlcNAc-(1-&gt;4)-Mur2Ac(oyl-L-Ala-gamma-D-Glu-L-Lys-D-Ala-D-Ala)-di-trans,octa-cis-undecaprenyl diphosphate = [GlcNAc-(1-&gt;4)-Mur2Ac(oyl-L-Ala-gamma-D-Glu-L-Lys-D-Ala-D-Ala)](n+1)-di-trans,octa-cis-undecaprenyl diphosphate + di-trans,octa-cis-undecaprenyl diphosphate + H(+). Its pathway is cell wall biogenesis; peptidoglycan biosynthesis. Peptidoglycan polymerase that is essential for cell division. This is Probable peptidoglycan glycosyltransferase FtsW from Methylococcus capsulatus (strain ATCC 33009 / NCIMB 11132 / Bath).